The chain runs to 240 residues: U1 small nuclear ribonucleoprotein C (240 aa).

The segment at 4 to 36 (YYCEYCDIYLTHSSPVGRRQHIQGRKHISAKIE) adopts a Matrin-type zinc-finger fold. 2 disordered regions span residues 86–122 (GMKH…SKYH) and 175–240 (IDSD…SVDA). 2 stretches are compositionally biased toward basic and acidic residues: residues 178–194 (DPVK…DNAI) and 203–219 (DQGD…HADH). Positions 226 to 240 (TDGTANGNDQVSVDA) are enriched in polar residues.

Belongs to the U1 small nuclear ribonucleoprotein C family. As to quaternary structure, U1 snRNP is composed of the 7 core Sm proteins B/B', D1, D2, D3, E, F and G that assemble in a heptameric protein ring on the Sm site of the small nuclear RNA to form the core snRNP, and at least 3 U1 snRNP-specific proteins U1-70K, U1-A and U1-C. U1-C interacts with U1 snRNA and the 5' splice-site region of the pre-mRNA.

The protein localises to the nucleus. Component of the spliceosomal U1 snRNP, which is essential for recognition of the pre-mRNA 5' splice-site and the subsequent assembly of the spliceosome. U1-C is directly involved in initial 5' splice-site recognition for both constitutive and regulated alternative splicing. The interaction with the 5' splice-site seems to precede base-pairing between the pre-mRNA and the U1 snRNA. Stimulates commitment or early (E) complex formation by stabilizing the base pairing of the 5' end of the U1 snRNA and the 5' splice-site region. The protein is U1 small nuclear ribonucleoprotein C of Plasmodium vivax (strain Salvador I).